Consider the following 681-residue polypeptide: Minichromosome maintenance domain-containing protein 2 (681 aa).

Ser292 is modified (phosphoserine). One can recognise an MCM domain in the interval 533-621 (KQFTTEDFEK…LIAALLLEIS (89 aa)).

In terms of tissue distribution, predominantly expressed in the gonads and the brain. Not detected in the heart, lung, nor embryonic fibroblasts.

Functionally, plays an important role in meiotic recombination and associated DNA double-strand break repair. This chain is Minichromosome maintenance domain-containing protein 2 (Mcmdc2), found in Mus musculus (Mouse).